Consider the following 353-residue polypeptide: Lipase-specific foldase (353 aa).

At 1–19 (MAQADRPARGGLAARPMRG) the chain is on the cytoplasmic side. Residues 20 to 40 (ASFALAGLVACAACAAVVLWL) traverse the membrane as a helical segment. At 41–353 (RPAAPSPAPA…AASLDRGAGG (313 aa)) the chain is on the periplasmic side.

Belongs to the lipase chaperone family. As to quaternary structure, monomer. Interacts with lipase (lip).

Its subcellular location is the cell inner membrane. Functionally, involved in the folding of the extracellular lipase (lip) during its passage through the periplasm. The polypeptide is Lipase-specific foldase (Burkholderia plantarii).